The sequence spans 338 residues: Ketol-acid reductoisomerase (NADP(+)) (338 aa).

A KARI N-terminal Rossmann domain is found at 1-181 (MKVYYDSDAD…GGGRAGIIET (181 aa)). NADP(+) contacts are provided by residues 24-27 (YGSQ), arginine 47, serine 50, serine 52, and 82-85 (DEHQ). Histidine 107 is an active-site residue. Residue glycine 133 participates in NADP(+) binding. Residues 182–327 (SFKEETETDL…AKLRAMMPWI (146 aa)) enclose the KARI C-terminal knotted domain. The Mg(2+) site is built by aspartate 190, glutamate 194, glutamate 226, and glutamate 230. Position 251 (serine 251) interacts with substrate.

Belongs to the ketol-acid reductoisomerase family. Mg(2+) serves as cofactor.

It catalyses the reaction (2R)-2,3-dihydroxy-3-methylbutanoate + NADP(+) = (2S)-2-acetolactate + NADPH + H(+). It carries out the reaction (2R,3R)-2,3-dihydroxy-3-methylpentanoate + NADP(+) = (S)-2-ethyl-2-hydroxy-3-oxobutanoate + NADPH + H(+). It participates in amino-acid biosynthesis; L-isoleucine biosynthesis; L-isoleucine from 2-oxobutanoate: step 2/4. The protein operates within amino-acid biosynthesis; L-valine biosynthesis; L-valine from pyruvate: step 2/4. Involved in the biosynthesis of branched-chain amino acids (BCAA). Catalyzes an alkyl-migration followed by a ketol-acid reduction of (S)-2-acetolactate (S2AL) to yield (R)-2,3-dihydroxy-isovalerate. In the isomerase reaction, S2AL is rearranged via a Mg-dependent methyl migration to produce 3-hydroxy-3-methyl-2-ketobutyrate (HMKB). In the reductase reaction, this 2-ketoacid undergoes a metal-dependent reduction by NADPH to yield (R)-2,3-dihydroxy-isovalerate. This Magnetococcus marinus (strain ATCC BAA-1437 / JCM 17883 / MC-1) protein is Ketol-acid reductoisomerase (NADP(+)).